The primary structure comprises 60 residues: Cytotoxin SP15a (60 aa).

Intrachain disulfides connect Cys-3-Cys-21, Cys-14-Cys-38, Cys-42-Cys-53, and Cys-54-Cys-59.

It belongs to the three-finger toxin family. Short-chain subfamily. Type IA cytotoxin sub-subfamily. Monomer in solution; Homodimer and oligomer in the presence of negatively charged lipids forming a pore with a size ranging between 20 and 30 Angstroms. Expressed by the venom gland.

It localises to the secreted. Its subcellular location is the target cell membrane. Shows cytolytic activity on many different cells by forming pore in lipid membranes. In vivo, increases heart rate or kills the animal by cardiac arrest. In addition, it binds to heparin with high affinity, interacts with Kv channel-interacting protein 1 (KCNIP1) in a calcium-independent manner, and binds to integrin alpha-V/beta-3 (ITGAV/ITGB3) with moderate affinity. In Naja atra (Chinese cobra), this protein is Cytotoxin SP15a.